The sequence spans 186 residues: Iodotyrosine deiodinase (186 aa).

Residues 11–15 (RKTVR), 38–39 (PS), and serine 39 contribute to the FMN site. 3-iodo-L-tyrosine-binding residues include methionine 41, glutamate 68, tyrosine 72, and lysine 92. L-tyrosine contacts are provided by methionine 41, glutamate 68, tyrosine 72, and lysine 92. Arginine 176 is an FMN binding site.

It belongs to the nitroreductase family. Homodimer. The cofactor is FMN.

It carries out the reaction 2 iodide + L-tyrosine + 2 NADP(+) = 3,5-diiodo-L-tyrosine + 2 NADPH + H(+). It catalyses the reaction iodide + L-tyrosine + NADP(+) = 3-iodo-L-tyrosine + NADPH. The catalysed reaction is 3-iodo-L-tyrosine + iodide + NADP(+) = 3,5-diiodo-L-tyrosine + NADPH + H(+). The enzyme catalyses L-tyrosine + chloride + NADP(+) = 3-chloro-L-tyrosine + NADPH. It carries out the reaction bromide + L-tyrosine + NADP(+) = 3-bromo-L-tyrosine + NADPH. Catalyzes the dehalogenation of halotyrosines such as 3-bromo-L-tyrosine, 3-chloro-L-tyrosine, 3-iodo-L-tyrosine and 3,5-diiodo-L-tyrosine. Activity towards 2-iodophenol is weak. The chain is Iodotyrosine deiodinase from Thermotoga neapolitana (strain ATCC 49049 / DSM 4359 / NBRC 107923 / NS-E).